The sequence spans 795 residues: Putative replication origin-binding protein (795 aa).

The Helicase ATP-binding domain occupies 121–289 (WLSNDKIKTL…DNFGKSIVVN (169 aa)). An ATP-binding site is contributed by 134–141 (SPMGTGKT).

This sequence belongs to the mimivirus R1 family.

Its function is as follows. Probably involved in DNA replication. May bind the genome origin of replication (ori). The protein is Putative replication origin-binding protein of Acanthamoeba polyphaga (Amoeba).